We begin with the raw amino-acid sequence, 165 residues long: Protein NKG7 (165 aa).

The next 4 helical transmembrane spans lie at 9–29, 61–81, 92–112, and 133–153; these read LLTS…NFWF, FCIL…MSCI, IVST…MTVY, and FYLG…SLGA.

The protein belongs to the PMP-22/EMP/MP20 family.

It localises to the cell membrane. The protein localises to the cytolytic granule membrane. In terms of biological role, regulates cytotoxic granule exocytosis in effector lymphocytes, thus acting as a critical mediator of inflammation in a broad range of infectious and non-infectious diseases. Essential for cytotoxic degranulation of natural killer (NK) cells and CD8(+) T-cells and for the activation of CD4(+) T-cells following infection. Plays a critical role in CD8(+) T-cell and NK cell-mediated cytolysis of target cells and contributes to the cytolytic activity via the perforin/granzyme pathway by enhancing exocytosis of LAMP1-carrying lytic granules. Contributes to NK cell-mediated control of cancer metastasis. The protein is Protein NKG7 (NKG7) of Bos taurus (Bovine).